The chain runs to 309 residues: MTAHSLIDAIRAAAPDLRGRLLENQSLADLTWFRVGGPAQVLFSPADEADLSAFLAALDPAVPVTVIGLGSNLIVRDGGIPGVAIRLGGKAFGSVEIDGETIRSGTAVPDMRLAKAAAEASLDGLAFFRGIPGSVGGALRMNAGAHGGETTDVLVEVRGIDRKGEVRRFTHAEMGFRYRHSSAPDDVIFTGATFRGRPGNREAIEAEMERVTAAREAAQPIRERTGGSTFKNPEGGKAWQLIDAAGCRGLIRGGAQVSEMHCNFLINRGGATAADIEGLGEEVRRRVRDHSGFELHWEIKRIGVEASPA.

The region spanning 34–221 (RVGGPAQVLF…TAAREAAQPI (188 aa)) is the FAD-binding PCMH-type domain. Arg-179 is an active-site residue. Ser-228 functions as the Proton donor in the catalytic mechanism. Glu-298 is an active-site residue.

It belongs to the MurB family. FAD is required as a cofactor.

It localises to the cytoplasm. It catalyses the reaction UDP-N-acetyl-alpha-D-muramate + NADP(+) = UDP-N-acetyl-3-O-(1-carboxyvinyl)-alpha-D-glucosamine + NADPH + H(+). The protein operates within cell wall biogenesis; peptidoglycan biosynthesis. Functionally, cell wall formation. In Methylorubrum extorquens (strain PA1) (Methylobacterium extorquens), this protein is UDP-N-acetylenolpyruvoylglucosamine reductase.